The sequence spans 191 residues: Probable DNA-directed RNA polymerase subunit delta (191 aa).

Residues 14 to 83 enclose the HTH HARE-type domain; sequence LSMIEVARAI…GENKWGLRSW (70 aa). 2 stretches are compositionally biased toward acidic residues: residues 117 to 136 and 142 to 191; these read GDEDAIDYNDDDPEDEDFTE and EYDE…EEEV. Positions 117–191 are disordered; it reads GDEDAIDYND…DEEEEEEEEV (75 aa).

It belongs to the RpoE family. As to quaternary structure, RNAP is composed of a core of 2 alpha, a beta and a beta' subunits. The core is associated with a delta subunit and one of several sigma factors.

Participates in both the initiation and recycling phases of transcription. In the presence of the delta subunit, RNAP displays an increased specificity of transcription, a decreased affinity for nucleic acids, and an increased efficiency of RNA synthesis because of enhanced recycling. This is Probable DNA-directed RNA polymerase subunit delta from Streptococcus agalactiae serotype Ia (strain ATCC 27591 / A909 / CDC SS700).